The primary structure comprises 170 residues: 2S seed storage protein 2 (170 aa).

The N-terminal stretch at 1–21 (MANKLFLVCATFALCFLLTNA) is a signal peptide. 2 consecutive propeptides follow at residues 22 to 37 (SIYR…DASN) and 73 to 88 (GPSL…DIEN).

This sequence belongs to the 2S seed storage albumins family. As to quaternary structure, the mature protein consists of a small and a large chain linked by disulfide bonds.

This is a 2S seed storage protein. This Arabidopsis thaliana (Mouse-ear cress) protein is 2S seed storage protein 2 (AT2S2).